A 236-amino-acid chain; its full sequence is Orotidine 5'-phosphate decarboxylase (236 aa).

Substrate-binding positions include D17, K39, 66–75, T125, R187, Q196, G216, and R217; that span reads DLKFYDIPNT. K68 functions as the Proton donor in the catalytic mechanism.

Belongs to the OMP decarboxylase family. Type 1 subfamily. As to quaternary structure, homodimer.

It catalyses the reaction orotidine 5'-phosphate + H(+) = UMP + CO2. The protein operates within pyrimidine metabolism; UMP biosynthesis via de novo pathway; UMP from orotate: step 2/2. In terms of biological role, catalyzes the decarboxylation of orotidine 5'-monophosphate (OMP) to uridine 5'-monophosphate (UMP). In Buchnera aphidicola subsp. Baizongia pistaciae (strain Bp), this protein is Orotidine 5'-phosphate decarboxylase.